We begin with the raw amino-acid sequence, 573 residues long: 3-(3-hydroxy-phenyl)propionate/3-hydroxycinnamic acid hydroxylase (573 aa).

FAD is bound by residues 18-47 (DVVI…IVEE) and 283-293 (FRKGRMFLAGD).

Belongs to the PheA/TfdB FAD monooxygenase family. Requires FAD as cofactor.

The catalysed reaction is 3-(3-hydroxyphenyl)propanoate + NADH + O2 + H(+) = 3-(2,3-dihydroxyphenyl)propanoate + NAD(+) + H2O. It carries out the reaction (2E)-3-(3-hydroxyphenyl)prop-2-enoate + NADH + O2 + H(+) = (2E)-3-(2,3-dihydroxyphenyl)prop-2-enoate + NAD(+) + H2O. It participates in aromatic compound metabolism; 3-phenylpropanoate degradation. In terms of biological role, catalyzes the insertion of one atom of molecular oxygen into position 2 of the phenyl ring of 3-(3-hydroxyphenyl)propionate (3-HPP) and hydroxycinnamic acid (3HCI). This is 3-(3-hydroxy-phenyl)propionate/3-hydroxycinnamic acid hydroxylase from Mycobacterium sp. (strain KMS).